Reading from the N-terminus, the 414-residue chain is Chaperone protein dnaJ 39 (414 aa).

Positions 1–24 (MATHSSRSENKDAGEEDELRRRNP) are enriched in basic and acidic residues. Residues 1–36 (MATHSSRSENKDAGEEDELRRRNPYEVLGIPSNSTD) are disordered. A J domain is found at 23 to 88 (NPYEVLGIPS…ENRRLYDTTG (66 aa)). A coiled-coil region spans residues 296–324 (EKESLRSTEAQIVSKRTELLKFEAEYHEV). The segment at 362–395 (TKQGSSKSRSWSKKKSSLLMEPREEGEVAVREEG) is disordered. A compositionally biased stretch (basic and acidic residues) spans 382 to 395 (EPREEGEVAVREEG).

Belongs to the DnaJ family. C/III subfamily. In terms of tissue distribution, expressed constitutively at low levels in seedlings, roots, leaves, stems, flowers and siliques.

It is found in the membrane. Functionally, plays a continuous role in plant development probably in the structural organization of compartments. Seems to be involved in early gravitropic signal transduction within the gravity-perceiving cells (statocytes). The polypeptide is Chaperone protein dnaJ 39 (ATJ39) (Arabidopsis thaliana (Mouse-ear cress)).